Reading from the N-terminus, the 857-residue chain is Bifunctional uridylyltransferase/uridylyl-removing enzyme (857 aa).

The interval methionine 1–glutamate 322 is uridylyltransferase. The tract at residues isoleucine 323–leucine 679 is uridylyl-removing. Residues valine 441 to leucine 563 form the HD domain. ACT domains are found at residues glutamine 680–glutamine 760 and leucine 788–isoleucine 857.

Belongs to the GlnD family. Mg(2+) serves as cofactor.

The catalysed reaction is [protein-PII]-L-tyrosine + UTP = [protein-PII]-uridylyl-L-tyrosine + diphosphate. The enzyme catalyses [protein-PII]-uridylyl-L-tyrosine + H2O = [protein-PII]-L-tyrosine + UMP + H(+). Uridylyltransferase (UTase) activity is inhibited by glutamine, while glutamine activates uridylyl-removing (UR) activity. Functionally, modifies, by uridylylation and deuridylylation, the PII regulatory proteins (GlnB and homologs), in response to the nitrogen status of the cell that GlnD senses through the glutamine level. Under low glutamine levels, catalyzes the conversion of the PII proteins and UTP to PII-UMP and PPi, while under higher glutamine levels, GlnD hydrolyzes PII-UMP to PII and UMP (deuridylylation). Thus, controls uridylylation state and activity of the PII proteins, and plays an important role in the regulation of nitrogen assimilation and metabolism. In Cupriavidus metallidurans (strain ATCC 43123 / DSM 2839 / NBRC 102507 / CH34) (Ralstonia metallidurans), this protein is Bifunctional uridylyltransferase/uridylyl-removing enzyme.